A 144-amino-acid polypeptide reads, in one-letter code: Cytochrome c-type biogenesis protein CcmE (144 aa).

Topologically, residues 1 to 7 (MKPRHKR) are cytoplasmic. A helical; Signal-anchor for type II membrane protein membrane pass occupies residues 8-28 (ALIIIAALIAIGVAALLILNA). Over 29–144 (LNSNIALYVT…DQAQKNGSAK (116 aa)) the chain is Periplasmic. 2 residues coordinate heme: H121 and Y125.

It belongs to the CcmE/CycJ family.

It localises to the cell inner membrane. Heme chaperone required for the biogenesis of c-type cytochromes. Transiently binds heme delivered by CcmC and transfers the heme to apo-cytochromes in a process facilitated by CcmF and CcmH. The protein is Cytochrome c-type biogenesis protein CcmE of Polynucleobacter necessarius subsp. necessarius (strain STIR1).